A 235-amino-acid polypeptide reads, in one-letter code: Small ribosomal subunit protein uS2c (235 aa).

It belongs to the universal ribosomal protein uS2 family.

Its subcellular location is the plastid. It localises to the chloroplast. This Marchantia polymorpha (Common liverwort) protein is Small ribosomal subunit protein uS2c (rps2).